The following is a 699-amino-acid chain: Receptor-type tyrosine-protein phosphatase epsilon (699 aa).

The first 19 residues, 1 to 19 (MEPFCPLLLASFSLSLARA), serve as a signal peptide directing secretion. Residues 20-36 (GQGNDTTPTESNWTSTT) are compositionally biased toward low complexity. The disordered stretch occupies residues 20–40 (GQGNDTTPTESNWTSTTAGPP). The Extracellular segment spans residues 20-45 (GQGNDTTPTESNWTSTTAGPPDPGAS). N-linked (GlcNAc...) asparagine glycosylation is found at N23 and N31. A helical transmembrane segment spans residues 46–68 (QPLLTWLLLPLLLLLFLLAAYFF). The Cytoplasmic segment spans residues 69–699 (RFRKQRKAVV…DIFSDYANFK (631 aa)). 2 Tyrosine-protein phosphatase domains span residues 134–393 (FREE…LLEY) and 425–688 (LEEE…VQDF). Residues D302, 334-340 (CSAGVGR), and Q378 each bind substrate. C334 functions as the Phosphocysteine intermediate in the catalytic mechanism. Residue C629 is the Phosphocysteine intermediate of the active site. Position 695 is a phosphotyrosine (Y695).

It belongs to the protein-tyrosine phosphatase family. Receptor class 4 subfamily. Monomer. Isoform 2: Homodimer. Can form oligomers. Dimerization is increased by oxidative stress and decreased by EGFR. Isoform 2 interacts with GRB2. Post-translationally, a catalytically active cytoplasmic form (p65) is produced by proteolytic cleavage of either isoform 1, isoform 2 or isoform 3. In terms of processing, phosphorylated on tyrosine residues by tyrosine kinase Neu. Glycosylated. Isoform 2 is expressed in the spleen and thymus (at protein level). Detected in fibroblasts, myeloid cells, macrophages, and T-cells but not in B-cell lines. Isoform 1 and isoform 2 are expressed predominantly in the brain, testes, and lungs, with lower levels present in lymph nodes, thymus, spleen, heart and mammary glands. Isoform 1 is expressed in osteoclasts and not in osteoblasts and its expression is related to osteoclast differentiation. It is also expressed in the erythrocytes. Isoform 2 is strongly expressed in skeletal muscle and L6 skeletal muscle cell line.

It localises to the cell membrane. The protein resides in the cytoplasm. It carries out the reaction O-phospho-L-tyrosyl-[protein] + H2O = L-tyrosyl-[protein] + phosphate. Its activity is regulated as follows. Inhibited by alendronate (ALN), orthovanadate, and phenylarsine oxide (PAO). Functionally, acts as a negative regulator of insulin receptor (IR) signaling and is involved in insulin-induced glucose metabolism mainly through direct dephosphorylation and inactivation of IR in hepatocytes and liver. Plays a critical role in signaling transduction pathways and phosphoprotein network topology in red blood cells. May play a role in osteoclast formation and function. Acts as a negative regulator of insulin receptor (IR) signaling in skeletal muscle. Regulates insulin-induced tyrosine phosphorylation of insulin receptor (IR) and insulin receptor substrate 1 (IRS-1), phosphorylation of protein kinase B and glycogen synthase kinase-3 and insulin induced stimulation of glucose uptake. Its function is as follows. Isoform 1 and isoform 2 act as a negative regulator of FceRI-mediated signal transduction leading to cytokine production and degranulation, most likely by acting at the level of SYK to affect downstream events such as phosphorylation of SLP76 and LAT and mobilization of Ca(2+). This Mus musculus (Mouse) protein is Receptor-type tyrosine-protein phosphatase epsilon (Ptpre).